The following is a 515-amino-acid chain: Maturase K (515 aa).

It belongs to the intron maturase 2 family. MatK subfamily.

It localises to the plastid. The protein resides in the chloroplast. Its function is as follows. Usually encoded in the trnK tRNA gene intron. Probably assists in splicing its own and other chloroplast group II introns. In Picea pungens (Colorado spruce), this protein is Maturase K.